The sequence spans 138 residues: Photosystem II extrinsic protein U (138 aa).

Positions methionine 1–alanine 28 are cleaved as a signal peptide. Positions leucine 29–glycine 42 are excised as a propeptide.

This sequence belongs to the PsbU family. As to quaternary structure, PSII is composed of 1 copy each of membrane proteins PsbA, PsbB, PsbC, PsbD, PsbE, PsbF, PsbH, PsbI, PsbJ, PsbK, PsbL, PsbM, PsbT, PsbX, PsbY, PsbZ, Psb30/Ycf12, peripheral proteins PsbO, CyanoQ (PsbQ), PsbU, PsbV and a large number of cofactors. It forms dimeric complexes.

It localises to the cellular thylakoid membrane. Functionally, one of the extrinsic, lumenal subunits of photosystem II (PSII). PSII is a light-driven water plastoquinone oxidoreductase, using light energy to abstract electrons from H(2)O, generating a proton gradient subsequently used for ATP formation. The extrinsic proteins stabilize the structure of photosystem II oxygen-evolving complex (OEC), the ion environment of oxygen evolution and protect the OEC against heat-induced inactivation. The sequence is that of Photosystem II extrinsic protein U from Picosynechococcus sp. (strain ATCC 27264 / PCC 7002 / PR-6) (Agmenellum quadruplicatum).